Consider the following 440-residue polypeptide: Gap junction alpha-8 protein (440 aa).

Residues 2 to 12 lie within the membrane without spanning it; that stretch reads GDWSFLGNILE. Residues 13 to 21 are Cytoplasmic-facing; sequence EVNEHSTVI. Residues 22–42 form a helical membrane-spanning segment; sequence GRVWLTVLFIFRILILGTAAE. Residues 43-71 are Extracellular-facing; the sequence is FVWGDEQSDFVCNTQQPGCENVCYDEAFP. 3 disulfides stabilise this stretch: cysteine 54/cysteine 201, cysteine 61/cysteine 195, and cysteine 65/cysteine 190. Residues 72–92 form a helical membrane-spanning segment; the sequence is ISHIRLWVLQIIFVSTPSLVY. At 93–161 the chain is on the cytoplasmic side; the sequence is VGHAVHHVRM…GTLLRTYVCH (69 aa). Residues 108–144 are disordered; it reads EREAEELSQQSPGNGGERAPLAADQGSVKKSSSSSKG. Residues 162-182 traverse the membrane as a helical segment; the sequence is IIFKTLFEVGFIVGHYFLYGF. Over 183–210 the chain is Extracellular; sequence RILPLYRCSRWPCPNVVDCFVSRPTEKT. The helical transmembrane segment at 211 to 231 threads the bilayer; it reads IFILFMLSVASVSLFLNILEM. The Cytoplasmic segment spans residues 232-440; the sequence is SHLGLKKIRS…SRARSDDLTV (209 aa). Positions 334–440 are disordered; sequence GAQEGVEEEQ…SRARSDDLTV (107 aa). 2 stretches are compositionally biased toward basic and acidic residues: residues 353-365 and 375-405; these read VGDK…RVST and EEEK…ELTP. Residues 423-432 show a composition bias toward low complexity; that stretch reads LSRLSKASSR.

It belongs to the connexin family. Alpha-type (group II) subfamily. In terms of assembly, a hemichannel or connexon is composed of a hexamer of connexins. A functional gap junction is formed by the apposition of two hemichannels. Forms heteromeric channels with GJA3. In terms of tissue distribution, detected in eye lens (at protein level). Eye lens.

The protein localises to the cell membrane. Its subcellular location is the cell junction. It localises to the gap junction. Its function is as follows. Structural component of eye lens gap junctions. Gap junctions are dodecameric channels that connect the cytoplasm of adjoining cells. They are formed by the docking of two hexameric hemichannels, one from each cell membrane. Small molecules and ions diffuse from one cell to a neighboring cell via the central pore. This Ovis aries (Sheep) protein is Gap junction alpha-8 protein (GJA8).